A 383-amino-acid chain; its full sequence is AP-1-like transcription factor YAP6 (383 aa).

Disordered regions lie at residues 1–64, 83–113, and 168–239; these read MQNP…ISVN, DYRS…SYNR, and TLPS…KAFR. Polar residues predominate over residues 13–64; the sequence is NQGSSSMATYNASEKNLNEHPSPQIAQPSTSQKLPYRINPTTTNGDTDISVN. Low complexity predominate over residues 88 to 101; sequence HQSPIHPSYIIPPH. Polar residues predominate over residues 168–184; it reads TLPSRNTSVTTAPPSFQ. The segment covering 185–206 has biased composition (low complexity); sequence NSADTAKNSADNNDNNDNVTKP. Positions 213–222 are enriched in polar residues; the sequence is QLISSSGKTL. The bZIP domain occupies 221-284; it reads TLRNTRRAAQ…NDNNILIAQH (64 aa). The interval 223-247 is basic motif; that stretch reads RNTRRAAQNRTAQKAFRQRKEKYIK. The span at 227 to 237 shows a compositional bias: low complexity; that stretch reads RAAQNRTAQKA. The interval 249–277 is leucine-zipper; it reads LEQKSKIFDDLLAENNNFKSLNDSLRNDN.

The protein belongs to the bZIP family. YAP subfamily. As to quaternary structure, homodimer.

It is found in the nucleus. In terms of biological role, transcription activator involved in the regulation of genes expressed in response to environmental changes and metabolic requirements. According to genome-wide promoter binding and gene expression studies it regulates, among others, genes involved in ribosome biogenesis, protein synthesis, carbohydrate metabolism, and carbohydrate transport. It may also be involved in pleiotropic drug resistance. When overexpressed, it confers resistance to cisplatin, methylmethanosulfonate, and mitomycin C, and increases cellular tolerance to sodium and lithium. The chain is AP-1-like transcription factor YAP6 (YAP6) from Saccharomyces cerevisiae (strain ATCC 204508 / S288c) (Baker's yeast).